The following is a 439-amino-acid chain: Xylose isomerase (439 aa).

Active-site residues include histidine 101 and aspartate 104. Glutamate 232, glutamate 268, histidine 271, aspartate 296, aspartate 307, aspartate 309, and aspartate 339 together coordinate Mg(2+).

The protein belongs to the xylose isomerase family. As to quaternary structure, homotetramer. Requires Mg(2+) as cofactor.

Its subcellular location is the cytoplasm. The enzyme catalyses alpha-D-xylose = alpha-D-xylulofuranose. The protein is Xylose isomerase (xylA) of Thermoanaerobacterium thermosaccharolyticum (strain ATCC 7956 / DSM 571 / NCIMB 9385 / NCA 3814 / NCTC 13789 / WDCM 00135 / 2032) (Clostridium thermosaccharolyticum).